The following is a 132-amino-acid chain: MIDLKIETAENILKYSYVLLENEFKNIQIGNDLIPLVNNSPLKKEKAERPEMNHFLLTKYNAVEENILYSSKILYELLEKEKHIDQLFLDYAKSQGIIINLNIERILYLSLTFLYSLGKVSFNQNMISRTES.

This is an uncharacterized protein from Bacillus subtilis (strain 168).